The primary structure comprises 320 residues: Stress-induced-phosphoprotein 1 (320 aa).

6 TPR repeats span residues 5-38, 40-72, 80-113, 140-173, 175-207, and 208-241; these read AIAE…DPSN, TFYN…GRET, AKAM…FRDP, AQEE…DPEN, ILYS…DSKF, and IKGY…DPSN. Residues 241 to 269 form a disordered region; that stretch reads NEEAREGVRNCLRSNDEDPEKAKERSLAD. The segment covering 242 to 269 has biased composition (basic and acidic residues); it reads EEAREGVRNCLRSNDEDPEKAKERSLAD. Positions 269 to 308 constitute an STI1 domain; sequence DPEVQEILRDPGMRMILEQMSNDPGAVREHLKNPEIFQKL.

Forms a complex with hsp-1/hsp70 and daf-21/hsp90. Interacts with daf-21/hsp90 (via the C-terminal MEEVD pentapeptide). As to expression, expressed ubiquitously in the whole body. Detected predominantly in the pharyngeal muscles, vulva epithelial cells, striated body-wall muscles, spermathecae and intestinal cell ring. Also observed in the tail regions of hermaphrodite and in the sensory rays and spicules of males.

It is found in the cytoplasm. Its function is as follows. Plays a role in gonad development. Up-regulates longevity and thermotolerance. Binds daf-21/hsp90 and inhibits its ATPase activity. The polypeptide is Stress-induced-phosphoprotein 1 (Caenorhabditis elegans).